A 112-amino-acid chain; its full sequence is Putative pterin-4-alpha-carbinolamine dehydratase (112 aa).

This sequence belongs to the pterin-4-alpha-carbinolamine dehydratase family.

It carries out the reaction (4aS,6R)-4a-hydroxy-L-erythro-5,6,7,8-tetrahydrobiopterin = (6R)-L-erythro-6,7-dihydrobiopterin + H2O. This Shewanella putrefaciens (strain CN-32 / ATCC BAA-453) protein is Putative pterin-4-alpha-carbinolamine dehydratase.